The following is a 149-amino-acid chain: Nucleoside diphosphate kinase (149 aa).

Residues K9, F57, R85, T91, R102, and N112 each coordinate ATP. Catalysis depends on H115, which acts as the Pros-phosphohistidine intermediate.

Belongs to the NDK family. Homotetramer. Mg(2+) serves as cofactor.

It is found in the cytoplasm. It carries out the reaction a 2'-deoxyribonucleoside 5'-diphosphate + ATP = a 2'-deoxyribonucleoside 5'-triphosphate + ADP. The enzyme catalyses a ribonucleoside 5'-diphosphate + ATP = a ribonucleoside 5'-triphosphate + ADP. Major role in the synthesis of nucleoside triphosphates other than ATP. The ATP gamma phosphate is transferred to the NDP beta phosphate via a ping-pong mechanism, using a phosphorylated active-site intermediate. In Staphylococcus saprophyticus subsp. saprophyticus (strain ATCC 15305 / DSM 20229 / NCIMB 8711 / NCTC 7292 / S-41), this protein is Nucleoside diphosphate kinase.